The primary structure comprises 479 residues: Kynurenine 3-monooxygenase (479 aa).

Residues valine 19, 37–40 (YEAR), and alanine 57 contribute to the FAD site. 2 residues coordinate L-kynurenine: arginine 85 and tyrosine 99. FAD contacts are provided by residues arginine 111, leucine 136, threonine 172, aspartate 304, and 317 to 318 (MN). Residues asparagine 363 and tyrosine 398 each contribute to the L-kynurenine site. The next 2 membrane-spanning stretches (helical) occupy residues 385 to 404 (FLHA…VAFT) and 425 to 445 (GLFV…VHHL).

The protein belongs to the aromatic-ring hydroxylase family. KMO subfamily. Requires FAD as cofactor. As to expression, expressed by organs containing secondary lymphoid tissue, such as the lung, spleen, mesenteric lymph node, thymus and peripheral lymph nodes.

It localises to the mitochondrion outer membrane. The catalysed reaction is L-kynurenine + NADPH + O2 + H(+) = 3-hydroxy-L-kynurenine + NADP(+) + H2O. It participates in cofactor biosynthesis; NAD(+) biosynthesis; quinolinate from L-kynurenine: step 1/3. Its function is as follows. Catalyzes the hydroxylation of L-kynurenine (L-Kyn) to form 3-hydroxy-L-kynurenine (L-3OHKyn). Required for synthesis of quinolinic acid, a neurotoxic NMDA receptor antagonist and potential endogenous inhibitor of NMDA receptor signaling in axonal targeting, synaptogenesis and apoptosis during brain development. Quinolinic acid may also affect NMDA receptor signaling in pancreatic beta cells, osteoblasts, myocardial cells, and the gastrointestinal tract. This chain is Kynurenine 3-monooxygenase, found in Mus musculus (Mouse).